The chain runs to 502 residues: uncharacterized protein (502 aa).

Low complexity-rich tracts occupy residues 1–10, 28–47, and 155–171; these read MQSTTNNNTN, SNRS…NNLS, and NTED…SVNS. 4 disordered regions span residues 1–57, 155–181, 212–362, and 438–487; these read MQST…VISY, NTED…LSAR, SLGN…TDKF, and TIDQ…TSNL. Over residues 212–230 the composition is skewed to polar residues; sequence SLGNSERNSPDRPSTQGDS. Composition is skewed to low complexity over residues 242–290 and 309–327; these read RNAS…SSRN and SNKN…TSIK. The segment covering 339 to 348 has biased composition (polar residues); it reads QTNKSKNQRG. The segment covering 446 to 460 has biased composition (low complexity); the sequence is TSDKNNSTKSNTKYN. Polar residues predominate over residues 470 to 487; the sequence is SYGTSKRSHNRSSNTSNL.

It localises to the virion. This is an uncharacterized protein from Acanthamoeba polyphaga (Amoeba).